An 87-amino-acid chain; its full sequence is Xibalbin-2 (87 aa).

Residues 1–25 (MKGVCTRKVLYFFMAVILFVAIVAS) form the signal peptide. The propeptide occupies 26 to 45 (EDTENRNPAMAMPLQRMEQE).

The protein belongs to the xibalbin-2 family. Contains 5 disulfide bonds. Expressed by the venom gland. Not found in the whole body.

It localises to the secreted. Functionally, probable neurotoxin. Moderately inhibits voltage-gated potassium channels (Kv1.1/KCNA1, Kv1.2/KCNA2, Kv1.3/KCNA3, and Kv1.6/KCNA6, with the highest toxicity against Kv1.6 (73.2% inhibition at 1 uM)) and weakly inhibits sodium channels (Nav1.4/SCN4A). Does not activate protein kinase A type II (PKA-II) and MAP kinase Erk1/2 in sensory neurons. Does not show cytotoxic activity. Does not have an impact on Ca2+, cAMP, and NO signaling in the cell types analyzed. Does not interfere with the adhesion of leukocytes to endothelial cells. Moderately inhibits voltage-gated potassium channels (Kv1.1/KCNA1, Kv1.2/KCNA2, Kv1.3/KCNA3, and Kv1.6/KCNA6, with the highest toxicity against Kv1.6 (75.9% inhibition at 1 uM)). Does not activate protein kinase A type II (PKA-II) and MAP kinase Erk1/2 in sensory neurons. Does not show cytotoxic activity. Does not have an impact on Ca2+, cAMP, and NO signaling in the cell types analyzed. Does not interfere with the adhesion of leukocytes to endothelial cells. This Xibalbanus tulumensis (Blind cave remipede) protein is Xibalbin-2.